We begin with the raw amino-acid sequence, 119 residues long: Type II secretion system protein I (119 aa).

Positions 1 to 5 (MNARG) are cleaved as a propeptide — leader sequence. M6 is modified (N-methylmethionine). The helical transmembrane segment at 6-26 (MTLLEVMVALAVFAIAGLAVM) threads the bilayer.

The protein belongs to the GSP I family. Type II secretion is composed of four main components: the outer membrane complex, the inner membrane complex, the cytoplasmic secretion ATPase and the periplasm-spanning pseudopilus. Interacts with core component ExeG. In terms of processing, cleaved by prepilin peptidase. Post-translationally, methylated by prepilin peptidase at the amino group of the N-terminal methionine once the leader sequence is cleaved by prepilin peptidase.

The protein resides in the cell inner membrane. Functionally, component of the type II secretion system required for the energy-dependent secretion of extracellular factors such as proteases and toxins from the periplasm. Part of the pseudopilus tip complex that is critical for the recognition and binding of secretion substrates. In Aeromonas hydrophila, this protein is Type II secretion system protein I (exeI).